A 206-amino-acid chain; its full sequence is uncharacterized protein (206 aa).

2 disordered regions span residues 64–123 (NTES…DPSL) and 155–206 (VTTP…SSGG). Polar residues predominate over residues 66–79 (ESTQKTATTQQQGL). A compositionally biased stretch (low complexity) spans 97 to 107 (AENNAQANQSE). Residues 108–118 (NRAESTTKAES) show a composition bias toward basic and acidic residues. Residues 155–167 (VTTPTGQVVQPQT) show a composition bias toward low complexity. Residues 182 to 198 (GSMNSKPVSRGGFSSPN) are compositionally biased toward polar residues.

This is an uncharacterized protein from Haemophilus influenzae (strain ATCC 51907 / DSM 11121 / KW20 / Rd).